The primary structure comprises 601 residues: Serine/threonine-protein phosphatase 2A 65 kDa regulatory subunit A beta isoform (601 aa).

Alanine 2 bears the N-acetylalanine mark. HEAT repeat units follow at residues 20 to 58 (DSLYPIAVLIDELRNEDVQLRLNSIKKLSTIALALGVER), 59 to 96 (TRTELLPFLTDTIYDEDEVLLALAEQLGNFTGLVGGPD), 97 to 135 (FAHCLLPPLESLATVEETVVRDKAVESLRQISQEHTPVA), 136 to 173 (LEAHFVPLVKRLASGDWFTSRTSACGLFSVCYPRASNA), 174 to 212 (VKAEIRQHFRSLCSDDTPMVRRAAASKLGEFAKVLELDS), 213 to 251 (VKTEIVPLFTNLASDEQDSVRLLAVEACVSIAQLLSQED), 252 to 290 (LEALVMPTLRQAAEDKSWRVRYMVADKFSELQKAVGPKI), 291 to 333 (ALSD…RETV), 334 to 372 (IMNQILPYIKELVSDTNQHVKSALASVIMGLSTVLGKEN), 373 to 411 (TIEHLLPLFLAQLKDECPEVRLNIISNLDCVNEVIGIRQ), 412 to 450 (LSQSLLPAIVELAEDAKWRVRLAIIEYMPLLAGQLGVEF), 451 to 489 (FDEKLNSLCMAWLVDHVYAIREAATNNLMKLVQKFGTEW), 490 to 528 (AQNTIVPKVLVMANDPNYLHRMTTLFCINALSEACGKEI), 529 to 567 (TTKQMLPIVLKMAGDQVANVRFNVAKSLQKIGPILDTNA), and 568 to 601 (LQGEVKPVLQKLGQDEDMDVKYFAQEAISVLALA).

Belongs to the phosphatase 2A regulatory subunit A family. As to quaternary structure, PP2A consists of a common heterodimeric core enzyme, composed of a 36 kDa catalytic subunit (subunit C) and a 65 kDa constant regulatory subunit (PR65 or subunit A), that associates with a variety of regulatory subunits. Proteins that associate with the core dimer include three families of regulatory subunits B (the R2/B/PR55/B55, R3/B''/PR72/PR130/PR59 and R5/B'/B56 families), the 48 kDa variable regulatory subunit, viral proteins, and cell signaling molecules. Interacts with IPO9. Interacts with SGO1. Interacts with RAF1.

Functionally, the PR65 subunit of protein phosphatase 2A serves as a scaffolding molecule to coordinate the assembly of the catalytic subunit and a variable regulatory B subunit. The chain is Serine/threonine-protein phosphatase 2A 65 kDa regulatory subunit A beta isoform (Ppp2r1b) from Mus musculus (Mouse).